The following is a 212-amino-acid chain: MNRKKLQKLTDSLTKNCKHFSKFEVKCLINLFYNLVGEVTERQGVIIGLDRNAFRNILHMTFGMTDDMIMDRVFRGFDKDNDGCISVTEWVYGLSVFLRGTLEEKMKYCFEVFDLNGDSFISKEEMFHMLKNSLLKQPSEEDPDEGIKDLVEITLKKMDHDHDGKLSFADYEQAVREETLLLEAFGPCLPDPKSQSEFEAQVFKDPNEFNEV.

EF-hand domains are found at residues threonine 65 to glycine 100, threonine 101 to lysine 136, and glycine 146 to leucine 181. Residues aspartate 78, aspartate 80, aspartate 82, cysteine 84, glutamate 89, aspartate 114, asparagine 116, aspartate 118, glutamate 125, aspartate 159, aspartate 161, aspartate 163, lysine 165, and aspartate 170 each coordinate Ca(2+).

In terms of assembly, component of the outer dynein arm-docking complex along with ODAD1, ODAD2, ODAD3 and ODAD4. Expressed in trachea multiciliated cells.

The protein resides in the cytoplasm. It is found in the cytoskeleton. It localises to the cilium axoneme. The protein localises to the cell projection. Its subcellular location is the cilium. The protein resides in the flagellum. Functionally, component of the outer dynein arm-docking complex (ODA-DC) that mediates outer dynein arms (ODA) binding onto the doublet microtubule. Seems to regulate the assembly of both ODAs and their axonemal docking complex onto ciliary microtubules. Regulates ciliary and flagellar motility and is required for cilia-driven determination of body laterality. This chain is Calaxin (CLXN), found in Bos taurus (Bovine).